The sequence spans 394 residues: MDLCHPEPAELSSGETEELQRIKWHRKQLLEDIQKLKDEIADVFAQIDCFESAEESRMAQKEKELCIGRKKFNMDPAKGIQYFIEHKLLTPDVQDIARFLYKGEGLNKTAIGTYLGERDPINLQVLQAFVDCHEFANLNLVQALRQFLWSFRLPGEAQKIDRMMEAFATRYCLCNPGVFQSTDTCYVLSFSIIMLNTSLHNPNVRDRPPFERFVSMNRGINNGSDLPEDQLRNLFDSIKSEPFSIPEDDGNDLTHTFFNPDREGWLLKLGGRVKTWKRRWFILTDNCLYYFEFTTDKEPRGIIPLENLSVQKVDDPKKPFCLELYNPSCRGQKIKACKTDGDGRVVEGKHESYRISATSAEERDQWIESIRASITRVPFYDLVSTRKKKIASKQ.

Residues 12-65 adopt a coiled-coil conformation; it reads SSGETEELQRIKWHRKQLLEDIQKLKDEIADVFAQIDCFESAEESRMAQKEKEL. The SEC7 domain occupies 54–241; sequence EESRMAQKEK…RNLFDSIKSE (188 aa). Residues 259 to 375 enclose the PH domain; sequence NPDREGWLLK…WIESIRASIT (117 aa). Residues 268 to 275, R279, Y290, and R300 contribute to the a 1,2-diacyl-sn-glycero-3-phospho-(1D-myo-inositol-3,4,5-trisphosphate) site; that span reads KLGGRVKT. The interval 386–394 is C-terminal autoinhibitory region; sequence RKKKIASKQ.

As to expression, expressed predominantly in peripheral blood leukocytes.

It localises to the cell membrane. In terms of biological role, promotes guanine-nucleotide exchange on ARF1 and ARF5. Promotes the activation of ARF factors through replacement of GDP with GTP. This is Cytohesin-4 (CYTH4) from Homo sapiens (Human).